A 154-amino-acid chain; its full sequence is 6,7-dimethyl-8-ribityllumazine synthase (154 aa).

5-amino-6-(D-ribitylamino)uracil-binding positions include F22, 56 to 58, and 80 to 82; these read AFE and TVI. A (2S)-2-hydroxy-3-oxobutyl phosphate-binding site is contributed by 85 to 86; that stretch reads AT. Catalysis depends on H88, which acts as the Proton donor. F113 contacts 5-amino-6-(D-ribitylamino)uracil. Residue R127 participates in (2S)-2-hydroxy-3-oxobutyl phosphate binding.

This sequence belongs to the DMRL synthase family. As to quaternary structure, forms an icosahedral capsid composed of 60 subunits, arranged as a dodecamer of pentamers.

It carries out the reaction (2S)-2-hydroxy-3-oxobutyl phosphate + 5-amino-6-(D-ribitylamino)uracil = 6,7-dimethyl-8-(1-D-ribityl)lumazine + phosphate + 2 H2O + H(+). It participates in cofactor biosynthesis; riboflavin biosynthesis; riboflavin from 2-hydroxy-3-oxobutyl phosphate and 5-amino-6-(D-ribitylamino)uracil: step 1/2. In terms of biological role, catalyzes the formation of 6,7-dimethyl-8-ribityllumazine by condensation of 5-amino-6-(D-ribitylamino)uracil with 3,4-dihydroxy-2-butanone 4-phosphate. This is the penultimate step in the biosynthesis of riboflavin. The chain is 6,7-dimethyl-8-ribityllumazine synthase from Bacillus licheniformis (strain ATCC 14580 / DSM 13 / JCM 2505 / CCUG 7422 / NBRC 12200 / NCIMB 9375 / NCTC 10341 / NRRL NRS-1264 / Gibson 46).